A 146-amino-acid chain; its full sequence is Large ribosomal subunit protein uL15 (146 aa).

A disordered region spans residues M1–P65. The span at R24–A34 shows a compositional bias: gly residues.

Belongs to the universal ribosomal protein uL15 family. In terms of assembly, part of the 50S ribosomal subunit.

Its function is as follows. Binds to the 23S rRNA. This chain is Large ribosomal subunit protein uL15, found in Bordetella petrii (strain ATCC BAA-461 / DSM 12804 / CCUG 43448).